Reading from the N-terminus, the 423-residue chain is CinA-like protein (423 aa).

Belongs to the CinA family.

The sequence is that of CinA-like protein from Desulforapulum autotrophicum (strain ATCC 43914 / DSM 3382 / VKM B-1955 / HRM2) (Desulfobacterium autotrophicum).